The primary structure comprises 332 residues: Nicotianamine synthase 1 (332 aa).

The protein belongs to the nicotianamine synthase (NAS)-like family. Expressed in roots.

It carries out the reaction 3 S-adenosyl-L-methionine = nicotianamine + 3 S-methyl-5'-thioadenosine + 3 H(+). In terms of biological role, synthesizes nicotianamine, a polyamine that is the first intermediate in the synthesis of the phytosiderophores of the mugineic acid type found in gramineae which serve as a sensor for the physiological iron status within the plant, and/or might be involved in the transport of iron. The polypeptide is Nicotianamine synthase 1 (NAS1) (Oryza sativa subsp. indica (Rice)).